Consider the following 299-residue polypeptide: UPF0282 protein TK1681 (299 aa).

The protein belongs to the UPF0282 family.

In Thermococcus kodakarensis (strain ATCC BAA-918 / JCM 12380 / KOD1) (Pyrococcus kodakaraensis (strain KOD1)), this protein is UPF0282 protein TK1681.